Reading from the N-terminus, the 123-residue chain is Small ribosomal subunit protein uS12cz/uS12cy (123 aa).

Belongs to the universal ribosomal protein uS12 family. Part of the 30S ribosomal subunit.

It is found in the plastid. It localises to the chloroplast. With S4 and S5 plays an important role in translational accuracy. Located at the interface of the 30S and 50S subunits. The sequence is that of Small ribosomal subunit protein uS12cz/uS12cy (rps12-A) from Nymphaea alba (White water-lily).